The sequence spans 365 residues: Ferrochelatase (365 aa).

The Fe cation site is built by H211 and E292.

Belongs to the ferrochelatase family.

The protein resides in the cytoplasm. It carries out the reaction heme b + 2 H(+) = protoporphyrin IX + Fe(2+). It participates in porphyrin-containing compound metabolism; protoheme biosynthesis; protoheme from protoporphyrin-IX: step 1/1. Functionally, catalyzes the ferrous insertion into protoporphyrin IX. This Aromatoleum aromaticum (strain DSM 19018 / LMG 30748 / EbN1) (Azoarcus sp. (strain EbN1)) protein is Ferrochelatase.